The chain runs to 154 residues: Aspartate carbamoyltransferase regulatory chain (154 aa).

The Zn(2+) site is built by Cys109, Cys114, Cys138, and Cys141.

It belongs to the PyrI family. As to quaternary structure, contains catalytic and regulatory chains. Zn(2+) is required as a cofactor.

Involved in allosteric regulation of aspartate carbamoyltransferase. The polypeptide is Aspartate carbamoyltransferase regulatory chain (Aeromonas salmonicida (strain A449)).